A 461-amino-acid chain; its full sequence is Deoxyguanosinetriphosphate triphosphohydrolase-like protein (461 aa).

A disordered region spans residues 22–41 (ERFLPDPPREKDNRPPFRRD). The span at 24 to 41 (FLPDPPREKDNRPPFRRD) shows a compositional bias: basic and acidic residues. The HD domain maps to 72-285 (RLTHSLEVAQ…MELADDIAYG (214 aa)).

Belongs to the dGTPase family. Type 2 subfamily.

The protein is Deoxyguanosinetriphosphate triphosphohydrolase-like protein of Haemophilus influenzae (strain PittGG).